Consider the following 344-residue polypeptide: D-arabinose dehydrogenase [NAD(P)+] heavy chain (344 aa).

Tyr71 serves as the catalytic Proton donor. His131 is a substrate binding site. Thr151 carries the phosphothreonine modification. 241-295 (SPLGSHGAPNLKIPLVKKLAEKYNVTGNDLLISYHIRQGTIVIPRSLNPVRISSS) contacts NADP(+).

The protein belongs to the aldo/keto reductase family. Heterodimer of a heavy chain and a light chain.

Its subcellular location is the cytoplasm. It carries out the reaction D-arabinose + NADP(+) = D-arabinono-1,4-lactone + NADPH + H(+). The catalysed reaction is D-arabinose + NAD(+) = D-arabinono-1,4-lactone + NADH + H(+). In terms of biological role, catalyzes the oxidation of D-arabinose, L-xylose, L-fucose and L-galactose in the presence of NADP(+). This is D-arabinose dehydrogenase [NAD(P)+] heavy chain (ARA1) from Saccharomyces cerevisiae (strain ATCC 204508 / S288c) (Baker's yeast).